The following is a 378-amino-acid chain: MMKERMRFKSNLFKIVNGVLIDLPSPRNFTFWWNFGSLLGLVLSIQLVTGIFLAMHYSCDSLLSFESVCHILRDVNEGWIIRLVHANGASFFFICLYCHIGRGMYFGSYMQTKTWIMGVLLFILVMAAAFLGYVLPWGQMSFWGATVITNLFSAIPYIGGDLVYWMWGGFSVGNSTLTRFFSLHFLVPFLVSLGAMLHIFFLHTTGSNNPLGVVADSDKIPFHIYYSAKDLLGFFFMFFFIIFISFLYPNLLGEPDNFIPANPLLTPHHIVPEWYFLFAYAILRSIPNKLGGVLGLLCALLVLFSLPLTHSNFFKSNALYIISRYFFWLFIVSFLMLTIGGGQPVCEPYVMCSQVWSCLYFTYFILCGPLRIFQDYYL.

Helical transmembrane passes span 35 to 55 (FGSL…FLAM), 79 to 101 (WIIR…CHIG), 114 to 134 (TWIM…LGYV), and 180 to 200 (FFSL…LHIF). Heme b is bound by residues His85 and His99. Heme b is bound by residues His184 and His198. His203 provides a ligand contact to a ubiquinone. Helical transmembrane passes span 226–246 (YSAK…FISF), 290–310 (LGGV…PLTH), 326–346 (FFWL…QPVC), and 350–370 (VMCS…CGPL).

The protein belongs to the cytochrome b family. In terms of assembly, the main subunits of complex b-c1 are: cytochrome b, cytochrome c1 and the Rieske protein. Heme b is required as a cofactor.

Its subcellular location is the mitochondrion inner membrane. Component of the ubiquinol-cytochrome c reductase complex (complex III or cytochrome b-c1 complex) that is part of the mitochondrial respiratory chain. The b-c1 complex mediates electron transfer from ubiquinol to cytochrome c. Contributes to the generation of a proton gradient across the mitochondrial membrane that is then used for ATP synthesis. The polypeptide is Cytochrome b (mt:Cyt-b) (Paraspadella gotoi (Arrow worm)).